The chain runs to 337 residues: MSGFYHKHFLKLLDFTPAELNSLLQLAAKLKADKKSGKEEAKLTGKNIALIFEKDSTRTRCSFEVAAYDQGARVTYLGPSGSQIGHKESIKDTARVLGRMYDGIQYRGYGQEIVETLAEYAGVPVWNGLTNEFHPTQLLADLLTMQEHLPGKAFNEMTLVYAGDARNNMGNSMLEAAALTGLDLRLVAPQACWPEAALVTECRALAQQNGGNITLTEDVAKGVEGADFIYTDVWVSMGEAKEKWAERIALLRDYQVNSKMMQLTGNPEVKFLHCLPAFHDDQTTLGKKMAEEFGLHGGMEVTDEVFESAASIVFDQAENRMHTIKAVMVATLSKLNN.

Carbamoyl phosphate contacts are provided by residues 56 to 59 (STRT), Q83, R107, and 134 to 137 (HPTQ). Residues N168, D232, and 236-237 (SM) each bind L-ornithine. Residues 274–275 (CL) and R320 contribute to the carbamoyl phosphate site.

Belongs to the aspartate/ornithine carbamoyltransferase superfamily. OTCase family.

It is found in the cytoplasm. The enzyme catalyses carbamoyl phosphate + L-ornithine = L-citrulline + phosphate + H(+). Its pathway is amino-acid biosynthesis; L-arginine biosynthesis; L-arginine from L-ornithine and carbamoyl phosphate: step 1/3. Reversibly catalyzes the transfer of the carbamoyl group from carbamoyl phosphate (CP) to the N(epsilon) atom of ornithine (ORN) to produce L-citrulline. This is Ornithine carbamoyltransferase (argI) from Shigella flexneri.